A 600-amino-acid polypeptide reads, in one-letter code: Alpha pinene synthase, chloroplastic (600 aa).

A disordered region spans residues Met-1 to Val-27. The transit peptide at Met-1 to Arg-31 directs the protein to the chloroplast. The Mg(2+) site is built by Asp-354, Asp-358, Asp-498, and Glu-506. Residues Asp-354 to Asp-358 carry the DDXXD motif motif.

Belongs to the terpene synthase family. Tpsa subfamily. It depends on Mg(2+) as a cofactor. Mn(2+) is required as a cofactor. Expressed at low levels in leaves.

It localises to the plastid. The protein resides in the chloroplast. It catalyses the reaction (2E)-geranyl diphosphate = alpha-pinene + diphosphate. The protein operates within secondary metabolite biosynthesis; terpenoid biosynthesis. Functionally, monoterpene synthase involved in the biosynthesis of volatile compounds widely used in aromatherapy and folk medicine, and present in culinary herbs. Mediates the conversion of (2E)-geranyl diphosphate (GPP) into alpha-pinene and, as minor compounds, into alpha-phellandrene, limonene and alpha-terpinolene. This Lavandula viridis (Green lavender) protein is Alpha pinene synthase, chloroplastic.